A 228-amino-acid chain; its full sequence is Flagellar L-ring protein (228 aa).

Residues 1–17 (MHYLRYFAIAFLLLLSS) form the signal peptide. C18 carries N-palmitoyl cysteine lipidation. C18 carries the S-diacylglycerol cysteine lipid modification.

The protein belongs to the FlgH family. As to quaternary structure, the basal body constitutes a major portion of the flagellar organelle and consists of four rings (L,P,S, and M) mounted on a central rod.

It localises to the cell membrane. It is found in the bacterial flagellum basal body. In terms of biological role, assembles around the rod to form the L-ring and probably protects the motor/basal body from shearing forces during rotation. The polypeptide is Flagellar L-ring protein (Wigglesworthia glossinidia brevipalpis).